Reading from the N-terminus, the 120-residue chain is Fluoride-specific ion channel FluC 1 (120 aa).

A run of 2 helical transmembrane segments spans residues 3 to 23 (ALLT…LNCA) and 42 to 62 (LGCL…VAAL). 2 residues coordinate Na(+): Gly69 and Thr72. Residues 99-119 (ANLAAGVGAAVLGMAAVGWFL) form a helical membrane-spanning segment.

Belongs to the fluoride channel Fluc/FEX (TC 1.A.43) family.

The protein resides in the cell membrane. It carries out the reaction fluoride(in) = fluoride(out). With respect to regulation, na(+) is not transported, but it plays an essential structural role and its presence is essential for fluoride channel function. In terms of biological role, fluoride-specific ion channel. Important for reducing fluoride concentration in the cell, thus reducing its toxicity. In Thermobifida fusca (strain YX), this protein is Fluoride-specific ion channel FluC 1.